Consider the following 877-residue polypeptide: Alanine--tRNA ligase (877 aa).

The Zn(2+) site is built by His-563, His-567, Cys-665, and His-669.

It belongs to the class-II aminoacyl-tRNA synthetase family. Requires Zn(2+) as cofactor.

It localises to the cytoplasm. The enzyme catalyses tRNA(Ala) + L-alanine + ATP = L-alanyl-tRNA(Ala) + AMP + diphosphate. Functionally, catalyzes the attachment of alanine to tRNA(Ala) in a two-step reaction: alanine is first activated by ATP to form Ala-AMP and then transferred to the acceptor end of tRNA(Ala). Also edits incorrectly charged Ser-tRNA(Ala) and Gly-tRNA(Ala) via its editing domain. The sequence is that of Alanine--tRNA ligase from Thermoanaerobacter pseudethanolicus (strain ATCC 33223 / 39E) (Clostridium thermohydrosulfuricum).